Here is a 132-residue protein sequence, read N- to C-terminus: UPF0251 protein PTH_0588 (132 aa).

The protein belongs to the UPF0251 family.

The polypeptide is UPF0251 protein PTH_0588 (Pelotomaculum thermopropionicum (strain DSM 13744 / JCM 10971 / SI)).